A 124-amino-acid polypeptide reads, in one-letter code: Outer dense fiber protein 2 (124 aa).

A coiled-coil region spans residues 13–124 (KEDSERLMEQ…EAIMEQLKEL (112 aa)).

This sequence belongs to the ODF2 family. In terms of assembly, self-associates. Associates with microtubules and forms a fibrillar structure partially linked to the microtubule network. Interacts through its C-terminus with PLK1. Interacts with ODF1. Interacts with MARK4; the interaction is required for localization of ODF2 to centrioles. Interacts with TSSK4. Interacts with AKNA. Interacts with QRICH2. Interacts with CFAP58. Interacts with BBOF1. Interacts with CCDC38. Interacts with CCDC42. Post-translationally, tyrosine phosphorylated. In terms of tissue distribution, detected in sperm flagella (at protein level).

It localises to the cytoplasm. It is found in the cytoskeleton. Its subcellular location is the microtubule organizing center. The protein localises to the centrosome. The protein resides in the cell projection. It localises to the cilium. It is found in the centriole. Its subcellular location is the spindle pole. The protein localises to the flagellum. Seems to be a major component of sperm tail outer dense fibers (ODF). ODFs are filamentous structures located on the outside of the axoneme in the midpiece and principal piece of the mammalian sperm tail and may help to maintain the passive elastic structures and elastic recoil of the sperm tail. May have a modulating influence on sperm motility. Functions as a general scaffold protein that is specifically localized at the distal/subdistal appendages of mother centrioles. Component of the centrosome matrix required for the localization of PLK1 and NIN to the centrosomes. Required for the formation and/or maintenance of normal CETN1 assembly. The protein is Outer dense fiber protein 2 of Mesocricetus auratus (Golden hamster).